We begin with the raw amino-acid sequence, 414 residues long: Probable protein phosphatase 2C 9 (414 aa).

A helical membrane pass occupies residues 15-37 (TATAAVAAAVSASAAAAVSSAID). Positions 56-95 (LQAGEDGRPGKRQRLARTASGAPRPDEDSASERPSCGRTE) are disordered. Residues 99–410 (RYGVTAVCGR…DNVSVVVVDL (312 aa)) enclose the PPM-type phosphatase domain. 2 residues coordinate Mn(2+): Asp-136 and Gly-137. Positions 186-195 (GNRASTRSDD) are enriched in basic and acidic residues. The tract at residues 186-212 (GNRASTRSDDEPACPCEQQTPSRRDHA) is disordered. Mn(2+) is bound at residue Asp-319. Residues 345-372 (APAARPSGVPSSAEAAETENGGAASVKG) form a disordered region. Low complexity predominate over residues 355-369 (SSAEAAETENGGAAS). Asp-401 serves as a coordination point for Mn(2+).

Belongs to the PP2C family. The cofactor is Mg(2+). Requires Mn(2+) as cofactor.

It localises to the membrane. The catalysed reaction is O-phospho-L-seryl-[protein] + H2O = L-seryl-[protein] + phosphate. It carries out the reaction O-phospho-L-threonyl-[protein] + H2O = L-threonyl-[protein] + phosphate. This Oryza sativa subsp. japonica (Rice) protein is Probable protein phosphatase 2C 9.